Here is a 114-residue protein sequence, read N- to C-terminus: Small ribosomal subunit protein bS6 (114 aa).

It belongs to the bacterial ribosomal protein bS6 family.

Functionally, binds together with bS18 to 16S ribosomal RNA. This is Small ribosomal subunit protein bS6 from Thermosynechococcus vestitus (strain NIES-2133 / IAM M-273 / BP-1).